The primary structure comprises 310 residues: MAERLTLAFMGSPDFSVPALHALHQAGHHIAAVYTQPPRPAGRGHRLTPCPVHRAAEALGLEVRHPALLKNAADEHEAFRALNLDAAVVAAYGLILPRVMLDTPQRGCLNIHASLLPRWRGASPIQNAILAGDTESGVTIMRMEEGLDTGPMLLKRAVPITETTTTPELHDALATAGAEAILHVLETQPDGENQDDALACYAPKLSRADGLLDWSQPAALLARRVRALNPWPGTFSGSLKILAAHAVTEASGIPGTVIGIGDDTLLIACGDGALCLDKVQKPGRPALDAAAFLRGHKLPAGTRLDEHGFS.

Residue 114 to 117 (SLLP) coordinates (6S)-5,6,7,8-tetrahydrofolate.

The protein belongs to the Fmt family.

The enzyme catalyses L-methionyl-tRNA(fMet) + (6R)-10-formyltetrahydrofolate = N-formyl-L-methionyl-tRNA(fMet) + (6S)-5,6,7,8-tetrahydrofolate + H(+). In terms of biological role, attaches a formyl group to the free amino group of methionyl-tRNA(fMet). The formyl group appears to play a dual role in the initiator identity of N-formylmethionyl-tRNA by promoting its recognition by IF2 and preventing the misappropriation of this tRNA by the elongation apparatus. This Granulibacter bethesdensis (strain ATCC BAA-1260 / CGDNIH1) protein is Methionyl-tRNA formyltransferase.